The following is a 409-amino-acid chain: Arginine deiminase (409 aa).

Residue cysteine 399 is the Amidino-cysteine intermediate of the active site.

This sequence belongs to the arginine deiminase family.

It is found in the cytoplasm. It catalyses the reaction L-arginine + H2O = L-citrulline + NH4(+). Its pathway is amino-acid degradation; L-arginine degradation via ADI pathway; carbamoyl phosphate from L-arginine: step 1/2. The chain is Arginine deiminase from Streptococcus sanguinis (strain SK36).